A 291-amino-acid chain; its full sequence is MNNDLWLPEEDFKGLPDNFLDNLVDPTNDVSVEDIETGDDEGDWDAKFQKLVPPPLDELMSLSYEFTCNGQRVQVQKHVPILKQSSSSEVFSTVDNSPPNVKVSKLLQSLSPVSVLKNTNGSGSPQNPNGDQKLAFLVKGIRSKRKRPTLLRVTFLKSFLLEMSQQFAPDESESSEISALKKRKKNKSRRLKCTHCETTTTPQWREGPNGRKTLCNACGIRFRSGRLVLEYRPAASPTFIPTVHSNLHKKIIYMRMKDNDQFDTRKIRAETSGPETRSRLRNFGRPMSYGQ.

The GATA-type zinc finger occupies 187 to 241; the sequence is KSRRLKCTHCETTTTPQWREGPNGRKTLCNACGIRFRSGRLVLEYRPAASPTFIP. The interval 271–291 is disordered; the sequence is TSGPETRSRLRNFGRPMSYGQ.

Belongs to the type IV zinc-finger family. Class A subfamily.

It is found in the nucleus. Transcriptional activator that specifically binds 5'-GATA-3' or 5'-GAT-3' motifs within gene promoters. May be involved in the regulation of some light-responsive genes. The chain is Putative GATA transcription factor 13 (GATA13) from Arabidopsis thaliana (Mouse-ear cress).